A 249-amino-acid polypeptide reads, in one-letter code: Isoprenyl transferase (249 aa).

The active site involves D25. D25 provides a ligand contact to Mg(2+). Substrate contacts are provided by residues 26–29 (GNGR), W30, R38, H42, and 70–72 (STE). N73 functions as the Proton acceptor in the catalytic mechanism. Substrate contacts are provided by residues W74, R76, R197, and 203-205 (RLS). Residue E216 coordinates Mg(2+).

Belongs to the UPP synthase family. Homodimer. Mg(2+) serves as cofactor.

Its function is as follows. Catalyzes the condensation of isopentenyl diphosphate (IPP) with allylic pyrophosphates generating different type of terpenoids. The chain is Isoprenyl transferase from Streptococcus thermophilus (strain CNRZ 1066).